A 285-amino-acid chain; its full sequence is Iodotyrosine deiodinase 1 (285 aa).

The chain crosses the membrane as a helical span at residues Met1–Lys21. FMN is bound by residues Arg96–Arg100 and Ser124–Gly125. 4 residues coordinate 3,5-diiodo-L-tyrosine: Ala126, Glu153, Tyr157, and Lys178. Residues Ala126, Glu153, Tyr157, and Lys178 each contribute to the 3-iodo-L-tyrosine site. FMN is bound by residues Thr233–Thr235 and Arg275.

The protein belongs to the nitroreductase family. As to quaternary structure, homodimer. Requires FMN as cofactor.

The protein resides in the cell membrane. The protein localises to the cytoplasmic vesicle membrane. The enzyme catalyses 2 iodide + L-tyrosine + 2 NADP(+) = 3,5-diiodo-L-tyrosine + 2 NADPH + H(+). The catalysed reaction is iodide + L-tyrosine + NADP(+) = 3-iodo-L-tyrosine + NADPH. It catalyses the reaction 3-iodo-L-tyrosine + iodide + NADP(+) = 3,5-diiodo-L-tyrosine + NADPH + H(+). It carries out the reaction L-tyrosine + chloride + NADP(+) = 3-chloro-L-tyrosine + NADPH. The enzyme catalyses bromide + L-tyrosine + NADP(+) = 3-bromo-L-tyrosine + NADPH. Functionally, catalyzes the dehalogenation of halotyrosines such as 3-bromo-L-tyrosine, 3-chloro-L-tyrosine, 3-iodo-L-tyrosine and 3,5-diiodo-L-tyrosine. During thyroid hormone biosynthesis, facilitates iodide salvage by catalysing the oxidative NADPH-dependent deiodination of the halogenated by-products of thyroid hormone production, monoiodotyrosine (L-MIT) and diiodotyrosine (L-DIT). The scavanged iodide can then reenter the hormone-producing pathways. Acts more efficiently on 3-iodo-L-tyrosine than 3,5-diiodo-L-tyrosine. This chain is Iodotyrosine deiodinase 1 (Iyd), found in Rattus norvegicus (Rat).